The chain runs to 212 residues: Stem bromelain (212 aa).

Intrachain disulfides connect Cys-23-Cys-63 and Cys-57-Cys-96. The active site involves Cys-26. N-linked (GlcNAc...) asparagine glycosylation is present at Asn-117. A disulfide bond links Cys-152 and Cys-199. His-158 is a catalytic residue.

This sequence belongs to the peptidase C1 family.

The catalysed reaction is Broad specificity for cleavage of proteins, but strong preference for Z-Arg-Arg-|-NHMec among small molecule substrates.. Its function is as follows. Cysteine proteinase with a high level of diversity in substrate specificity. The chain is Stem bromelain from Ananas comosus (Pineapple).